The chain runs to 467 residues: Gustatory and odorant receptor 22 (467 aa).

The Cytoplasmic portion of the chain corresponds to 1-106 (MIHTQMEDAQ…MPRTTFTWCS (106 aa)). A helical membrane pass occupies residues 107-127 (KAFLWAYFIYACETVIVLVVA). Residues 128–144 (RERINKFISTSDKRFDE) are Extracellular-facing. The helical transmembrane segment at 145 to 165 (VIYNIIFMSIMVPHFLLPVAS) threads the bilayer. The Cytoplasmic portion of the chain corresponds to 166–198 (WRNGSEVAKFKNMWTDFQYKYLIVTGKPIVFPK). A helical transmembrane segment spans residues 199 to 219 (LYPITWTLCIVSWSLSLVIIL). The Extracellular portion of the chain corresponds to 220–238 (SQYYLQPDFQFCHTFAYYH). Residues 239 to 259 (IIAMLNGFCSLWFVNCTAFGT) traverse the membrane as a helical segment. The Cytoplasmic portion of the chain corresponds to 260–304 (ASKAFAKELTDVLATERPAAKLTEYRHLWVDLSHMMQQLGKAYSN). Residues 305 to 325 (MYGIYCLVIFFTTIIATYGSL) traverse the membrane as a helical segment. Over 326–337 (SEIIEHGATYKE) the chain is Extracellular. A helical transmembrane segment spans residues 338 to 358 (VGLFVIVFYCMSLLFIICNEA). Residues 359 to 414 (HHASKRVGLNFQERLLNVNLTAVDKATQKEVEMFLVAIDKNPPTMNLDGYANINRG) are Cytoplasmic-facing. The chain crosses the membrane as a helical span at residues 415–435 (LITSNISFMATYLVVLMQFKL). Residues 436-467 (TLLRQSAKNAFISALKANLSRIRSLDADKVNT) lie on the Extracellular side of the membrane. The N-linked (GlcNAc...) asparagine glycan is linked to Asn-453.

The protein belongs to the insect chemoreceptor superfamily. Gustatory receptor (GR) family. Gr21a subfamily. In terms of tissue distribution, carbon dioxide-responsive neurons coexpress GPRgr22 and GPRgr24 in the maxillary palp at both larval and adult life stages.

It is found in the cell membrane. Functionally, gustatory receptor which mediates acceptance or avoidance behavior, depending on its substrates. GPRgr22 and GPRgr24 together are sufficient for olfactory carbon dioxide-chemosensation. The polypeptide is Gustatory and odorant receptor 22 (Anopheles gambiae (African malaria mosquito)).